The chain runs to 306 residues: tRNA dimethylallyltransferase (306 aa).

12 to 19 (GPTGTKKS) lines the ATP pocket.

The protein belongs to the IPP transferase family. In terms of assembly, monomer. The cofactor is Mg(2+).

The catalysed reaction is adenosine(37) in tRNA + dimethylallyl diphosphate = N(6)-dimethylallyladenosine(37) in tRNA + diphosphate. In terms of biological role, catalyzes the transfer of a dimethylallyl group onto the adenine at position 37 in tRNAs that read codons beginning with uridine, leading to the formation of N6-(dimethylallyl)adenosine (i(6)A). The sequence is that of tRNA dimethylallyltransferase from Mycoplasmoides gallisepticum (strain R(low / passage 15 / clone 2)) (Mycoplasma gallisepticum).